Consider the following 463-residue polypeptide: MALSCTLNRYLLLMAQEHLEFRLPEIKSLLSLFGGQFGSSQETFGKSPFWILSIPSEDIARNLMKRTVCAKSIFELWGHGQSPEELYSSLKNYPVEKMVPFLHSDSTYKIKIHTFNKTLTQEEKIKRIDALEFLPFEGKVNLKKPQHVFSVLEDYGLDPNCIPENPHNIYFGRWIADGQRELIESYSVKKRHFIGNTSMDAGLSFIMANHGKVKENDIVFDPFVGTGGLLIACAHFGAYVYGTDIDYNTVHGLGKATRKNQKWRGPDENIRANLRQYGLEKYYLDVLVSDASKPSWRKGTYFDAIITDPPYGIRESTRRTGSQKEIPKGIEKWEKCPESHVPVSLSYHLSDMFLDLLNFAAETLVLGGRLVYWLPVYTPEYTEEMVPWHPCLELISNCEQKLSSHTSRRLITMEKVKKFENRDQYSHLLSDHFLPYQGHNSFREKYFSGVTKRIAKEEKSTQE.

Alanine 2 is modified (N-acetylalanine).

This sequence belongs to the class I-like SAM-binding methyltransferase superfamily. TRM11 methyltransferase family. In terms of assembly, part of the heterodimeric TRMT11-TRM112 methyltransferase complex; this complex forms an active tRNA methyltransferase, where TRMT112 acts as an activator of the catalytic subunit TRMT11.

Its subcellular location is the cytoplasm. The catalysed reaction is guanosine(10) in tRNA + S-adenosyl-L-methionine = N(2)-methylguanosine(10) in tRNA + S-adenosyl-L-homocysteine + H(+). Functionally, catalytic subunit of the TRMT11-TRM112 methyltransferase complex, that specifically mediates the S-adenosyl-L-methionine-dependent N(2)-methylation of guanosine nucleotide at position 10 (m2G10) in tRNAs. This is one of the major tRNA (guanine-N(2))-methyltransferases. The polypeptide is tRNA (guanine(10)-N(2))-methyltransferase TRMT11 (Pongo abelii (Sumatran orangutan)).